A 344-amino-acid chain; its full sequence is Follistatin (344 aa).

The signal sequence occupies residues 1–29 (MARPRHQPGGLCLLLLLLCQFMEDRSAQA). Residues 30–103 (GNCWLRQAKN…TCENVDCGPG (74 aa)) form the TB domain. 18 disulfide bridges follow: Cys-32-Cys-55, Cys-42-Cys-88, Cys-56-Cys-91, Cys-95-Cys-106, Cys-100-Cys-116, Cys-118-Cys-150, Cys-122-Cys-143, Cys-132-Cys-164, Cys-168-Cys-179, Cys-173-Cys-189, Cys-192-Cys-225, Cys-196-Cys-218, Cys-207-Cys-239, Cys-245-Cys-256, Cys-250-Cys-267, Cys-270-Cys-302, Cys-274-Cys-295, and Cys-284-Cys-316. Residues 94-117 (TCENVDCGPGKKCRMNKKNKPRCV) enclose the Follistatin-like 1 domain. In terms of domain architecture, Kazal-like 1 spans 112 to 166 (NKPRCVCAPDCSNITWKGLVCGLDGKTYRNECALLKARCKEQPELQVQYQGKCKK). Residue Asn-124 is glycosylated (N-linked (GlcNAc...) asparagine). The Follistatin-like 2 domain maps to 167–190 (TCRDVFCPGSSTCVVDQTNNAYCV). A Kazal-like 2 domain is found at 186–241 (NAYCVTCNRICPEPTSSEQYLCGNDGVTYPSACHLRKATCLLGRSIGLAYEGKCIK). In terms of domain architecture, Follistatin-like 3 spans 244 to 268 (SCDDIQCTGGKKCLWDFKVGRGRCS). One can recognise a Kazal-like 3 domain in the interval 261-318 (KVGRGRCSLCGELCPESKSEEPVCASDNATYASECAMKEAACSSGVLLEVKHSGSCNS). An N-linked (GlcNAc...) asparagine glycan is attached at Asn-288. The interval 316–344 (CNSISEDTEDEEEDEDQDYSFPISSILEW) is disordered. The segment covering 321–333 (EDTEDEEEDEDQD) has biased composition (acidic residues).

As to quaternary structure, monomer.

It localises to the secreted. Binds directly to activin and functions as an activin antagonist. Specific inhibitor of the biosynthesis and secretion of pituitary follicle stimulating hormone (FSH). This Bubalus bubalis (Domestic water buffalo) protein is Follistatin.